Here is an 801-residue protein sequence, read N- to C-terminus: Phenylalanine--tRNA ligase beta subunit (801 aa).

The region spanning 39 to 153 is the tRNA-binding domain; the sequence is AEGLSKLVVG…EEAVPGDAIF (115 aa). The B5 domain occupies 406 to 481; the sequence is TEPVEVSTSL…RIYGYDKLPT (76 aa). Positions 459, 465, 468, and 469 each coordinate Mg(2+). Positions 708 to 801 constitute an FDX-ACB domain; that stretch reads TKFPAMTRDI…LTEQVGAEVR (94 aa).

The protein belongs to the phenylalanyl-tRNA synthetase beta subunit family. Type 1 subfamily. Tetramer of two alpha and two beta subunits. Mg(2+) is required as a cofactor.

Its subcellular location is the cytoplasm. It carries out the reaction tRNA(Phe) + L-phenylalanine + ATP = L-phenylalanyl-tRNA(Phe) + AMP + diphosphate + H(+). The chain is Phenylalanine--tRNA ligase beta subunit from Streptococcus pyogenes serotype M18 (strain MGAS8232).